Here is a 1373-residue protein sequence, read N- to C-terminus: Ribonuclease 3 (1373 aa).

Disordered regions lie at residues 1–99 (MQGN…PVRP), 119–406 (MPPP…EEEL), and 447–496 (FEEE…SSSS). Low complexity predominate over residues 47 to 69 (PAQYQYEPPSAPSSSYSNSQAPS). Pro residues-rich tracts occupy residues 70 to 99 (FMPP…PVRP), 119 to 133 (MPPP…PASG), and 144 to 159 (MVPP…PPVM). Low complexity-rich tracts occupy residues 160-169 (PQQVNYQYPP) and 185-200 (NNSS…SSTP). 3 stretches are compositionally biased toward basic and acidic residues: residues 214-271 (QNER…DRGR), 278-288 (RSYERSRERDR), and 297-312 (RRSP…EYKR). 2 positions are modified to phosphoserine: Ser354 and Ser372. 2 stretches are compositionally biased toward basic and acidic residues: residues 363–398 (RWEE…PPEK) and 447–459 (FEEE…EKAK). The tract at residues 389–1364 (KEAEEVPPEK…RWEREHQERE (976 aa)) is necessary for interaction with DGCR8 and pri-miRNA processing activity. The span at 474–490 (EDLESSSESECETDDDS) shows a compositional bias: acidic residues. Positions 535, 537, 548, 560, 608, 675, and 679 each coordinate Zn(2+). RNase III domains follow at residues 875–1055 (LMHL…LEGS) and 1106–1232 (LTEF…IDKD). Residue Glu968 coordinates Mg(2+). Residue His1025 coordinates Zn(2+). Mg(2+)-binding residues include Asn1041, Glu1044, Glu1146, Asp1218, and Glu1221. The 75-residue stretch at 1259–1333 (DPKSQLQQCC…AMDALEKYNF (75 aa)) folds into the DRBM domain.

This sequence belongs to the ribonuclease III family. As to quaternary structure, component of the microprocessor complex, or pri-miRNA processing protein complex, which is composed of DROSHA and DGCR8. The microprocessor complex is a heterotrimer; each of the two DROSHA RNase III domains binds one DGCR8 (via C-terminal region). Interacts with SP1 and SNIP1. Interacts with SRRT/ARS2. Interacts with CPSF3 and ISY1; this interaction is in an RNA dependent manner. Interacts with PUS10; interaction promotes pri-miRNAs processing. The cofactor is Mg(2+). Mn(2+) serves as cofactor. In terms of processing, degraded by autophagy in response to neuronal activity in motor neurons. In terms of tissue distribution, expressed in motor neurons (at protein level).

The protein resides in the nucleus. It localises to the nucleolus. It is found in the cytoplasm. The catalysed reaction is Endonucleolytic cleavage to 5'-phosphomonoester.. In terms of biological role, ribonuclease III double-stranded (ds) RNA-specific endoribonuclease that is involved in the initial step of microRNA (miRNA) biogenesis. Component of the microprocessor complex that is required to process primary miRNA transcripts (pri-miRNAs) to release precursor miRNA (pre-miRNA) in the nucleus. Within the microprocessor complex, DROSHA cleaves the 3' and 5' strands of a stem-loop in pri-miRNAs (processing center 11 bp from the dsRNA-ssRNA junction) to release hairpin-shaped pre-miRNAs that are subsequently cut by the cytoplasmic DICER to generate mature miRNAs. Involved also in pre-rRNA processing. Cleaves double-strand RNA and does not cleave single-strand RNA. Involved in the formation of GW bodies. Plays a role in growth homeostasis in response to autophagy in motor neurons. In Mus musculus (Mouse), this protein is Ribonuclease 3 (Drosha).